The chain runs to 301 residues: Glycine--tRNA ligase alpha subunit (301 aa).

This sequence belongs to the class-II aminoacyl-tRNA synthetase family. Tetramer of two alpha and two beta subunits.

It is found in the cytoplasm. It catalyses the reaction tRNA(Gly) + glycine + ATP = glycyl-tRNA(Gly) + AMP + diphosphate. The protein is Glycine--tRNA ligase alpha subunit of Alteromonas mediterranea (strain DSM 17117 / CIP 110805 / LMG 28347 / Deep ecotype).